The sequence spans 524 residues: Cytochrome P450 6k1 (524 aa).

Cysteine 464 contacts heme.

It belongs to the cytochrome P450 family. The cofactor is heme.

It is found in the endoplasmic reticulum membrane. It localises to the microsome membrane. The chain is Cytochrome P450 6k1 (CYP6K1) from Blattella germanica (German cockroach).